Here is a 110-residue protein sequence, read N- to C-terminus: DNA-directed RNA polymerase subunit omega (110 aa).

The protein belongs to the RNA polymerase subunit omega family. The RNAP catalytic core consists of 2 alpha, 1 beta, 1 beta' and 1 omega subunit. When a sigma factor is associated with the core the holoenzyme is formed, which can initiate transcription.

It catalyses the reaction RNA(n) + a ribonucleoside 5'-triphosphate = RNA(n+1) + diphosphate. Promotes RNA polymerase assembly. Latches the N- and C-terminal regions of the beta' subunit thereby facilitating its interaction with the beta and alpha subunits. This is DNA-directed RNA polymerase subunit omega from Mycobacterium leprae (strain Br4923).